The primary structure comprises 274 residues: Triosephosphate isomerase (274 aa).

31 to 33 is a binding site for substrate; sequence NWK. Residue histidine 118 is the Electrophile of the active site. The Proton acceptor role is filled by glutamate 188. Substrate is bound by residues glycine 194, serine 234, and 255–256; that span reads GG.

Belongs to the triosephosphate isomerase family. Homodimer.

The protein localises to the cytoplasm. The catalysed reaction is D-glyceraldehyde 3-phosphate = dihydroxyacetone phosphate. It functions in the pathway carbohydrate biosynthesis; gluconeogenesis. It participates in carbohydrate degradation; glycolysis; D-glyceraldehyde 3-phosphate from glycerone phosphate: step 1/1. Involved in the gluconeogenesis. Catalyzes stereospecifically the conversion of dihydroxyacetone phosphate (DHAP) to D-glyceraldehyde-3-phosphate (G3P). This chain is Triosephosphate isomerase, found in Chlamydia trachomatis serovar L2 (strain ATCC VR-902B / DSM 19102 / 434/Bu).